Consider the following 253-residue polypeptide: Redox-sensing transcriptional repressor Rex (253 aa).

The H-T-H motif DNA-binding region spans 26–65; it reads LYLRALTALSERSVPTVSSEELATAAGVNSAKLRKDFSYL. 100–105 contributes to the NAD(+) binding site; it reads GIGNLG. The segment at 217–253 is disordered; that stretch reads RKAGEDSAAEDEGAPPMRATPASRKGPDGDMPAVMPA.

Belongs to the transcriptional regulatory Rex family. In terms of assembly, homodimer.

It localises to the cytoplasm. Modulates transcription in response to changes in cellular NADH/NAD(+) redox state. This Streptomyces griseus subsp. griseus (strain JCM 4626 / CBS 651.72 / NBRC 13350 / KCC S-0626 / ISP 5235) protein is Redox-sensing transcriptional repressor Rex.